Here is a 227-residue protein sequence, read N- to C-terminus: Probable chorismate pyruvate-lyase (227 aa).

Substrate contacts are provided by Arg75, Leu113, and Glu173. Positions 192–227 (SGDWSAHPRVREHGRPLEHTASRAHPATRASDEQRR) are disordered. The span at 200–212 (RVREHGRPLEHTA) shows a compositional bias: basic and acidic residues.

Belongs to the UbiC family.

The protein resides in the cytoplasm. The enzyme catalyses chorismate = 4-hydroxybenzoate + pyruvate. Its pathway is cofactor biosynthesis; ubiquinone biosynthesis. Removes the pyruvyl group from chorismate, with concomitant aromatization of the ring, to provide 4-hydroxybenzoate (4HB) for the ubiquinone pathway. This Paraburkholderia xenovorans (strain LB400) protein is Probable chorismate pyruvate-lyase.